Consider the following 465-residue polypeptide: 2-methylcitrate synthase, mitochondrial (465 aa).

Residues 1–29 (MAMTMRSTRHASKLAQTARLALTNSRRYS) constitute a mitochondrion transit peptide. The CoA site is built by R74 and K192. H269 lines the oxaloacetate pocket. Position 304 (L304) interacts with CoA. H305 is a catalytic residue. Residues V346, G348, and Y349 each contribute to the CoA site. Residues H351 and R360 each coordinate oxaloacetate. H351 is a catalytic residue. The CoA site is built by T400, K401, and N406. The active site involves D408. The oxaloacetate site is built by R434 and R454.

This sequence belongs to the citrate synthase family. As to quaternary structure, homodimer.

It is found in the mitochondrion matrix. It carries out the reaction propanoyl-CoA + oxaloacetate + H2O = (2S,3S)-2-methylcitrate + CoA + H(+). The enzyme catalyses oxaloacetate + acetyl-CoA + H2O = citrate + CoA + H(+). It participates in organic acid metabolism; propanoate degradation. Functionally, component of the methylcitrate cycle that catalyzes the synthesis of (2S,3S)-2-methylcitrate from propionyl-CoA and oxaloacetate. Plays an important role in detoxification of propionyl-CoA, an inhibitor of both primary and secondary metabolism. Also has citrate synthase activity using as substrates acetyl-CoA and oxaloacetate. Plays a key role in the estabishment of invasive pulmonary aspergillosis. In Aspergillus fumigatus (strain CBS 144.89 / FGSC A1163 / CEA10) (Neosartorya fumigata), this protein is 2-methylcitrate synthase, mitochondrial.